A 106-amino-acid chain; its full sequence is Large ribosomal subunit protein bL21 (106 aa).

The protein belongs to the bacterial ribosomal protein bL21 family. Part of the 50S ribosomal subunit. Contacts protein L20.

This protein binds to 23S rRNA in the presence of protein L20. The chain is Large ribosomal subunit protein bL21 from Chlamydia felis (strain Fe/C-56) (Chlamydophila felis).